Here is a 680-residue protein sequence, read N- to C-terminus: Anosmin-1 (680 aa).

Residues 1 to 24 form the signal peptide; that stretch reads MVPGVPGAVLTLCLWLAASSGCLA. Cystine bridges form between Cys49–Cys83, Cys53–Cys77, Cys86–Cys105, Cys90–Cys101, and Cys116–Cys120. Asn71 carries an N-linked (GlcNAc...) asparagine glycan. The 50-residue stretch at 127-176 folds into the WAP domain; it reads LLVKQGDCPAPEKASGFAAACVESCEVDNECSGVKKCCSNGCGHTCQVPK. Fibronectin type-III domains follow at residues 186–287, 292–400, 425–523, and 550–658; these read PRKE…SKDP, APAN…THAT, PTRP…TPPC, and KPEN…LPPS. N-linked (GlcNAc...) asparagine glycans are attached at residues Asn209, Asn300, Asn470, Asn553, and Asn564. The tract at residues 642-680 is disordered; it reads EGPATIKTFRTPELPPSSAHRSHLKHRHPHHYKPSPERY. Positions 661–674 are enriched in basic residues; the sequence is HRSHLKHRHPHHYK.

As to quaternary structure, interacts with FGFR1; this interaction does not interfere with FGF2-binding to FGFR1. Binds heparin. Heparin may promote or interfere with ANOS1-FGFR1-FGF2 complex formation depending on the sequential order of its binding to the various constituents. For instance, heparin-ANOS1 interaction favors subsequent binding to pre-existing binary FGFR1-FGF2 complex, while heparin-FGF2 complex does not interact with ANOS1-FGFR1. In terms of processing, N-glycosylated. May be proteolytically cleaved at the cell surface and released from the cell surface. Expressed in the cerebellum (at protein level).

It is found in the cell membrane. The protein resides in the secreted. Has a dual branch-promoting and guidance activity, which may play an important role in the patterning of mitral and tufted cell collaterals to the olfactory cortex. Chemoattractant for fetal olfactory epithelial cells. This is Anosmin-1 from Homo sapiens (Human).